The following is a 1877-amino-acid chain: Proprotein convertase subtilisin/kexin type 5 (1877 aa).

A signal peptide spans 1 to 34 (MDWDWGNRCSRPGRRDLLCVLALLAGCLLPVCRT). A propeptide spanning residues 35–116 (RVYTNHWAVK…QQVVKKRTKR (82 aa)) is cleaved from the precursor. Residues 117–1768 (DYDLSHAQST…EAEFYEHTKT (1652 aa)) lie on the Extracellular side of the membrane. Positions 136-455 (MWYMHCSDNT…FGLMDAEAMV (320 aa)) constitute a Peptidase S8 domain. Active-site charge relay system residues include Asp-173 and His-214. Asn-227 and Asn-383 each carry an N-linked (GlcNAc...) asparagine glycan. Ser-388 serves as the catalytic Charge relay system. One can recognise a P/Homo B domain in the interval 463-603 (TVPQQHVCVE…SLVLYGTSVQ (141 aa)). The short motif at 521-523 (RGD) is the Cell attachment site element. FU repeat units follow at residues 632–682 (EDYA…GHYH), 685–732 (KKRC…GSYE), 736–779 (KNVC…GQFF), 781–826 (GHDC…SYYL), 834–881 (YKSC…GEYI), 884–929 (QGHC…WKFE), 931–981 (KKQC…GHYP), 984–1030 (GHAC…GEFQ), 1034–1079 (YEEC…KTFG), 1081–1123 (KWEC…GFHG), 1127–1168 (LGEC…STWP), 1206–1248 (TSQN…GTWP), 1252–1299 (SGSC…GFYA), 1301–1345 (DGVC…KHVA), 1347–1390 (EGVC…SFYP), 1392–1438 (MRQC…GTYK), 1442–1487 (NDEC…VEYW), 1491–1536 (SHRC…GYHT), 1540–1585 (SQQC…GYYG), 1589–1636 (SGRC…HYYA), 1640–1685 (AQTC…GEYR), and 1691–1738 (NFNC…SHSR). Residues 638–1753 (CDPECSEVGC…CDCQSSTDEC (1116 aa)) form a CRM (Cys-rich motif) region. The N-linked (GlcNAc...) asparagine glycan is linked to Asn-667. Residues Asn-754, Asn-804, and Asn-854 are each glycosylated (N-linked (GlcNAc...) asparagine). N-linked (GlcNAc...) asparagine glycosylation is found at Asn-951 and Asn-1016. Asn-1220 carries an N-linked (GlcNAc...) asparagine glycan. A glycan (N-linked (GlcNAc...) asparagine) is linked at Asn-1317. N-linked (GlcNAc...) asparagine glycosylation is present at Asn-1523. Residues Asn-1711 and Asn-1733 are each glycosylated (N-linked (GlcNAc...) asparagine). The chain crosses the membrane as a helical span at residues 1769–1789 (ALLVTSGAMLLLLLGAAAVVW). Residues 1790–1877 (RKSRSRPVAK…EYDDESYSYQ (88 aa)) lie on the Cytoplasmic side of the membrane. AC stretches follow at residues 1825–1844 (VIEY…IVYM) and 1856–1877 (YGLL…YSYQ).

The protein belongs to the peptidase S8 family. As to expression, PC5A is expressed in most tissues but is most abundant in the intestine and adrenals. PC5B is expressed in the intestine, adrenals and lung but not in the brain.

It is found in the secreted. The protein localises to the endomembrane system. Its function is as follows. Serine endoprotease that processes various proproteins by cleavage at paired basic amino acids, recognizing the RXXX[KR]R consensus motif. Likely functions in the constitutive and regulated secretory pathways. Plays an essential role in pregnancy establishment by proteolytic activation of a number of important factors such as BMP2, CALD1 and alpha-integrins. May be responsible for the maturation of gastrointestinal peptides. May be involved in the cellular proliferation of adrenal cortex via the activation of growth factors. The polypeptide is Proprotein convertase subtilisin/kexin type 5 (Pcsk5) (Mus musculus (Mouse)).